A 342-amino-acid polypeptide reads, in one-letter code: Succinylglutamate desuccinylase (342 aa).

Residues His63, Glu66, and His155 each coordinate Zn(2+). Residue Glu219 is part of the active site.

This sequence belongs to the AspA/AstE family. Succinylglutamate desuccinylase subfamily. It depends on Zn(2+) as a cofactor.

It carries out the reaction N-succinyl-L-glutamate + H2O = L-glutamate + succinate. The protein operates within amino-acid degradation; L-arginine degradation via AST pathway; L-glutamate and succinate from L-arginine: step 5/5. Its function is as follows. Transforms N(2)-succinylglutamate into succinate and glutamate. In Vibrio parahaemolyticus serotype O3:K6 (strain RIMD 2210633), this protein is Succinylglutamate desuccinylase.